The primary structure comprises 185 residues: Acireductone dioxygenase (185 aa).

Fe(2+) is bound by residues His97, His99, Glu103, and His141. 4 residues coordinate Ni(2+): His97, His99, Glu103, and His141.

The protein belongs to the acireductone dioxygenase (ARD) family. Monomer. Fe(2+) serves as cofactor. It depends on Ni(2+) as a cofactor.

The enzyme catalyses 1,2-dihydroxy-5-(methylsulfanyl)pent-1-en-3-one + O2 = 3-(methylsulfanyl)propanoate + CO + formate + 2 H(+). It catalyses the reaction 1,2-dihydroxy-5-(methylsulfanyl)pent-1-en-3-one + O2 = 4-methylsulfanyl-2-oxobutanoate + formate + 2 H(+). It functions in the pathway amino-acid biosynthesis; L-methionine biosynthesis via salvage pathway; L-methionine from S-methyl-5-thio-alpha-D-ribose 1-phosphate: step 5/6. Its function is as follows. Catalyzes 2 different reactions between oxygen and the acireductone 1,2-dihydroxy-3-keto-5-methylthiopentene (DHK-MTPene) depending upon the metal bound in the active site. Fe-containing acireductone dioxygenase (Fe-ARD) produces formate and 2-keto-4-methylthiobutyrate (KMTB), the alpha-ketoacid precursor of methionine in the methionine recycle pathway. Ni-containing acireductone dioxygenase (Ni-ARD) produces methylthiopropionate, carbon monoxide and formate, and does not lie on the methionine recycle pathway. This Stenotrophomonas maltophilia (strain R551-3) protein is Acireductone dioxygenase.